The following is a 121-amino-acid chain: Large ribosomal subunit protein uL14 (121 aa).

This sequence belongs to the universal ribosomal protein uL14 family. As to quaternary structure, part of the 50S ribosomal subunit. Forms a cluster with proteins L3 and L19. In the 70S ribosome, L14 and L19 interact and together make contacts with the 16S rRNA in bridges B5 and B8.

Its function is as follows. Binds to 23S rRNA. Forms part of two intersubunit bridges in the 70S ribosome. The chain is Large ribosomal subunit protein uL14 from Synechococcus sp. (strain CC9902).